A 489-amino-acid polypeptide reads, in one-letter code: Adenylosuccinate synthetase 2, chloroplastic (489 aa).

The transit peptide at 1-54 (MPLASLSLDPAPFPLIRPAAGWSGRVLPVPGPAPRLCRPLRAAPVAPATTDEPS) directs the protein to the chloroplast. Residues 76–82 (GDEGKGK) and 104–106 (GHT) each bind GTP. Residue Asp-77 is the Proton acceptor of the active site. Positions 77 and 104 each coordinate Mg(2+). IMP is bound by residues 77–80 (DEGK), 102–105 (NAGH), Thr-194, Arg-208, Gln-288, Thr-303, and Arg-367. His-105 functions as the Proton donor in the catalytic mechanism. 363–369 (TTTGRPR) is a binding site for substrate. GTP is bound by residues Arg-369, 395–397 (KLD), and 478–480 (GVG).

This sequence belongs to the adenylosuccinate synthetase family. In terms of assembly, homodimer. Requires Mg(2+) as cofactor.

The protein resides in the plastid. It is found in the chloroplast. It catalyses the reaction IMP + L-aspartate + GTP = N(6)-(1,2-dicarboxyethyl)-AMP + GDP + phosphate + 2 H(+). It participates in purine metabolism; AMP biosynthesis via de novo pathway; AMP from IMP: step 1/2. Plays an important role in the de novo pathway and in the salvage pathway of purine nucleotide biosynthesis. Catalyzes the first committed step in the biosynthesis of AMP from IMP. The polypeptide is Adenylosuccinate synthetase 2, chloroplastic (Sorghum bicolor (Sorghum)).